A 1331-amino-acid polypeptide reads, in one-letter code: DNA-directed RNA polymerase subunit beta' (1331 aa).

The Zn(2+) site is built by C220, C293, C300, and C303. 2 disordered regions span residues 1236–1257 and 1294–1331; these read DFVDEGTSRSPNGYSNVVTNDN and ISGDELISDDTPIPSDVQGKAPVIDDDAMIDDNWMKDQ. The segment covering 1243–1257 has biased composition (polar residues); it reads SRSPNGYSNVVTNDN.

This sequence belongs to the RNA polymerase beta' chain family. RpoC2 subfamily. In cyanobacteria the RNAP catalytic core is composed of 2 alpha, 1 beta, 1 beta', 1 gamma and 1 omega subunit. When a sigma factor is associated with the core the holoenzyme is formed, which can initiate transcription. The cofactor is Zn(2+).

The catalysed reaction is RNA(n) + a ribonucleoside 5'-triphosphate = RNA(n+1) + diphosphate. DNA-dependent RNA polymerase catalyzes the transcription of DNA into RNA using the four ribonucleoside triphosphates as substrates. The chain is DNA-directed RNA polymerase subunit beta' from Picosynechococcus sp. (strain ATCC 27264 / PCC 7002 / PR-6) (Agmenellum quadruplicatum).